An 88-amino-acid chain; its full sequence is UPF0250 protein swp_3927 (88 aa).

It belongs to the UPF0250 family.

In Shewanella piezotolerans (strain WP3 / JCM 13877), this protein is UPF0250 protein swp_3927.